A 194-amino-acid chain; its full sequence is Probable nicotinate-nucleotide adenylyltransferase (194 aa).

It belongs to the NadD family.

The enzyme catalyses nicotinate beta-D-ribonucleotide + ATP + H(+) = deamido-NAD(+) + diphosphate. The protein operates within cofactor biosynthesis; NAD(+) biosynthesis; deamido-NAD(+) from nicotinate D-ribonucleotide: step 1/1. In terms of biological role, catalyzes the reversible adenylation of nicotinate mononucleotide (NaMN) to nicotinic acid adenine dinucleotide (NaAD). The polypeptide is Probable nicotinate-nucleotide adenylyltransferase (Brucella abortus (strain 2308)).